Here is a 238-residue protein sequence, read N- to C-terminus: Uridylate kinase (238 aa).

An ATP-binding site is contributed by 12–15 (KLSG). Gly-54 is a UMP binding site. ATP-binding residues include Gly-55 and Arg-59. UMP is bound by residues Asp-74 and 135–142 (TGNPFFTT). Positions 162, 168, and 171 each coordinate ATP.

This sequence belongs to the UMP kinase family. In terms of assembly, homohexamer.

The protein resides in the cytoplasm. The enzyme catalyses UMP + ATP = UDP + ADP. It participates in pyrimidine metabolism; CTP biosynthesis via de novo pathway; UDP from UMP (UMPK route): step 1/1. With respect to regulation, inhibited by UTP. Its function is as follows. Catalyzes the reversible phosphorylation of UMP to UDP. This Herminiimonas arsenicoxydans protein is Uridylate kinase.